The primary structure comprises 132 residues: SH2 domain-containing protein 1B (132 aa).

Residues Tyr-5 to Ile-101 form the SH2 domain. The residue at position 127 (Tyr-127) is a Phosphotyrosine.

In terms of assembly, binds to the phosphorylated receptors CD84, SLAMF1, LY9 and CD244. Does not bind to non-phosphorylated SLAMF1. Interacts with SLAMF7 (via ITSM phosphorylated on 'Tyr-304'). Interacts with Src kinases HCK, LYN, FYN, FGR and LCK (via kinase domains). Interacts (phosphorylated at Tyr-127) with PLCG1.

Its function is as follows. Cytoplasmic adapter regulating receptors of the signaling lymphocytic activation molecule (SLAM) family such as CD84, SLAMF1, LY9 and CD244. In SLAM signaling seems to cooperate with SH2D1A/SAP. Plays a role in regulation of effector functions of natural killer (NK) cells by controlling signal transduction through CD244/2B4 without effecting its tyrosine phosphorylation; downstream signaling involves PLCG1 and ERK activation. Activation of SLAMF7-mediated NK cell function does not effect receptor tyrosine phosphorylation but distal signaling. In the context of NK cell-mediated cytotoxicity does not enhance conjugate formation with target cells but stimulates polarization of the microtubule-organizing center and cytotoxic granules toward the NK cell synapse. Negatively regulates CD40-induced cytokine production in dendritic cells downstream of SLAM family receptors probably by inducing activation of the PI3K pathway to inhibit p38 MAPK and JNK activation. The protein is SH2 domain-containing protein 1B (SH2D1B) of Homo sapiens (Human).